Reading from the N-terminus, the 432-residue chain is uncharacterized protein (432 aa).

2 consecutive SIS domains span residues 105–244 (WLTE…DLVS) and 277–422 (CDKK…VDLP).

This is an uncharacterized protein from Saccharomyces cerevisiae (strain ATCC 204508 / S288c) (Baker's yeast).